The following is a 334-amino-acid chain: Beta-hexosaminidase (334 aa).

Substrate-binding positions include Asp62, Arg70, Arg130, and 160-161; that span reads KH. Catalysis depends on His173, which acts as the Proton donor/acceptor. Asp243 serves as the catalytic Nucleophile.

Belongs to the glycosyl hydrolase 3 family. NagZ subfamily.

The protein resides in the cytoplasm. It carries out the reaction Hydrolysis of terminal non-reducing N-acetyl-D-hexosamine residues in N-acetyl-beta-D-hexosaminides.. Its pathway is cell wall biogenesis; peptidoglycan recycling. In terms of biological role, plays a role in peptidoglycan recycling by cleaving the terminal beta-1,4-linked N-acetylglucosamine (GlcNAc) from peptide-linked peptidoglycan fragments, giving rise to free GlcNAc, anhydro-N-acetylmuramic acid and anhydro-N-acetylmuramic acid-linked peptides. This Photobacterium profundum (strain SS9) protein is Beta-hexosaminidase.